The following is a 460-amino-acid chain: Phosphomethylpyrimidine synthase (460 aa).

Residues Asn-80, Met-109, Tyr-139, His-175, 195–197 (SRG), 236–239 (DSLR), and Glu-275 contribute to the substrate site. Position 279 (His-279) interacts with Zn(2+). Residue Tyr-302 coordinates substrate. His-343 contacts Zn(2+). Residues Cys-423, Cys-426, and Cys-431 each coordinate [4Fe-4S] cluster.

Belongs to the ThiC family. The cofactor is [4Fe-4S] cluster.

The catalysed reaction is 5-amino-1-(5-phospho-beta-D-ribosyl)imidazole + S-adenosyl-L-methionine = 4-amino-2-methyl-5-(phosphooxymethyl)pyrimidine + CO + 5'-deoxyadenosine + formate + L-methionine + 3 H(+). It participates in cofactor biosynthesis; thiamine diphosphate biosynthesis. Functionally, catalyzes the synthesis of the hydroxymethylpyrimidine phosphate (HMP-P) moiety of thiamine from aminoimidazole ribotide (AIR) in a radical S-adenosyl-L-methionine (SAM)-dependent reaction. The sequence is that of Phosphomethylpyrimidine synthase from Microcystis aeruginosa (strain NIES-843 / IAM M-2473).